Reading from the N-terminus, the 264-residue chain is Phosphonates import ATP-binding protein PhnC (264 aa).

The region spanning 7 to 254 is the ABC transporter domain; that stretch reads LSIRAASKTF…KLIDIYGPEF (248 aa). Residue 39–46 coordinates ATP; the sequence is GPSGSGKS.

It belongs to the ABC transporter superfamily. Phosphonates importer (TC 3.A.1.9.1) family. The complex is composed of two ATP-binding proteins (PhnC), two transmembrane proteins (PhnE) and a solute-binding protein (PhnD).

The protein localises to the cell inner membrane. The enzyme catalyses phosphonate(out) + ATP + H2O = phosphonate(in) + ADP + phosphate + H(+). Functionally, part of the ABC transporter complex PhnCDE involved in phosphonates import. Responsible for energy coupling to the transport system. The protein is Phosphonates import ATP-binding protein PhnC of Caulobacter vibrioides (strain ATCC 19089 / CIP 103742 / CB 15) (Caulobacter crescentus).